We begin with the raw amino-acid sequence, 383 residues long: Chorismate synthase (383 aa).

Residues arginine 40 and arginine 46 each contribute to the NADP(+) site. Residues 128-130 (RAS), glycine 291, 306-310 (KPIPT), and arginine 332 each bind FMN.

The protein belongs to the chorismate synthase family. In terms of assembly, homotetramer. It depends on FMNH2 as a cofactor.

The catalysed reaction is 5-O-(1-carboxyvinyl)-3-phosphoshikimate = chorismate + phosphate. The protein operates within metabolic intermediate biosynthesis; chorismate biosynthesis; chorismate from D-erythrose 4-phosphate and phosphoenolpyruvate: step 7/7. Functionally, catalyzes the anti-1,4-elimination of the C-3 phosphate and the C-6 proR hydrogen from 5-enolpyruvylshikimate-3-phosphate (EPSP) to yield chorismate, which is the branch point compound that serves as the starting substrate for the three terminal pathways of aromatic amino acid biosynthesis. This reaction introduces a second double bond into the aromatic ring system. This is Chorismate synthase from Moorella thermoacetica (strain ATCC 39073 / JCM 9320).